The chain runs to 939 residues: Phosphoenolpyruvate carboxylase (939 aa).

Residues His-151 and Lys-593 contribute to the active site.

The protein belongs to the PEPCase type 1 family. Requires Mg(2+) as cofactor.

The catalysed reaction is oxaloacetate + phosphate = phosphoenolpyruvate + hydrogencarbonate. Functionally, forms oxaloacetate, a four-carbon dicarboxylic acid source for the tricarboxylic acid cycle. The protein is Phosphoenolpyruvate carboxylase of Gloeobacter violaceus (strain ATCC 29082 / PCC 7421).